The chain runs to 1526 residues: Myosin type-2 heavy chain 1 (1526 aa).

Residues 22–73 enclose the Myosin N-terminal SH3-like domain; sequence DDKRWVWISDPETAFTKAWIKEDLPDKKYVVRYNNSRDEKIVGEDEIDPVNP. One can recognise a Myosin motor domain in the interval 77 to 755; it reads DRVNDMAELT…VLAELEERRV (679 aa). 170-177 serves as a coordination point for ATP; the sequence is GESGAGKT. Actin-binding regions lie at residues 634 to 656 and 734 to 748; these read LNQL…VPNE and RIGV…GVLA. In terms of domain architecture, IQ spans 758–787; sequence LQRLMTMLQTRIRGFLQRKIFQKRLKDIQA. Residues 875–1244 adopt a coiled-coil conformation; that stretch reads ALDKEEILRR…SLTKQVNELS (370 aa). At Ser1044 the chain carries Phosphoserine.

This sequence belongs to the TRAFAC class myosin-kinesin ATPase superfamily. Myosin family. Binds to cdc4 and rlc1.

Required for cell division. It is a component of the cdc12 'spot', a structure thought to mark the site of septation. May work in conjunction with myo3. This Schizosaccharomyces pombe (strain 972 / ATCC 24843) (Fission yeast) protein is Myosin type-2 heavy chain 1 (myo2).